The following is a 430-amino-acid chain: Enolase (430 aa).

Q167 lines the (2R)-2-phosphoglycerate pocket. The active-site Proton donor is the E209. The Mg(2+) site is built by D246, E287, and D314. K339, R368, S369, and K390 together coordinate (2R)-2-phosphoglycerate. The active-site Proton acceptor is the K339.

The protein belongs to the enolase family. Mg(2+) is required as a cofactor.

It localises to the cytoplasm. Its subcellular location is the secreted. The protein resides in the cell surface. It catalyses the reaction (2R)-2-phosphoglycerate = phosphoenolpyruvate + H2O. The protein operates within carbohydrate degradation; glycolysis; pyruvate from D-glyceraldehyde 3-phosphate: step 4/5. Catalyzes the reversible conversion of 2-phosphoglycerate (2-PG) into phosphoenolpyruvate (PEP). It is essential for the degradation of carbohydrates via glycolysis. The chain is Enolase from Prochlorococcus marinus (strain AS9601).